The sequence spans 80 residues: Kappa-actitoxin-Avd4i (80 aa).

The N-terminal stretch at 1-19 is a signal peptide; it reads MNKALFLCLVVLCAAVVFA. The propeptide occupies 20–31; sequence AEDLQKAKHAPF. 3 cysteine pairs are disulfide-bonded: C41/C76, C43/C69, and C59/C77.

It belongs to the sea anemone type 3 (BDS) potassium channel toxin family. As to expression, weakly expressed in the ectodermal tissue from the distal and proximal tentacles, body wall, and oral disk.

Its subcellular location is the secreted. The protein localises to the nematocyst. In terms of biological role, blocks Kv3 voltage-gated potassium channels. Reduces blood pressure. The polypeptide is Kappa-actitoxin-Avd4i (Anemonia viridis (Snakelocks anemone)).